We begin with the raw amino-acid sequence, 341 residues long: HTH-type transcriptional repressor PurR (341 aa).

An HTH lacI-type domain is found at 2-56; the sequence is ATIKDVAKRANVSTTTVSHVINKTRFVAEETRNAVWAAIKELHYSPSAVARSLKV. Residues 4–23 constitute a DNA-binding region (H-T-H motif); that stretch reads IKDVAKRANVSTTTVSHVIN. Residues 48 to 56 mediate DNA binding; that stretch reads SAVARSLKV. Positions 73, 190, 192, 221, and 275 each coordinate hypoxanthine.

As to quaternary structure, homodimer.

Its pathway is purine metabolism; purine nucleotide biosynthesis [regulation]. Its function is as follows. Is the main repressor of the genes involved in the de novo synthesis of purine nucleotides, regulating purB, purC, purEK, purF, purHD, purL, purMN and guaBA expression. PurR is allosterically activated to bind its cognate DNA by binding the purine corepressors, hypoxanthine or guanine, thereby effecting transcription repression. The protein is HTH-type transcriptional repressor PurR of Klebsiella pneumoniae (strain 342).